The following is a 206-amino-acid chain: LOB domain-containing protein 35 (206 aa).

Residues 4-105 enclose the LOB domain; it reads TCCSACKVMK…EQINSAKNEL (102 aa). The disordered stretch occupies residues 184–206; it reads ASTSGGTSATQKTLPFPQNHNQP.

This sequence belongs to the LOB domain-containing protein family.

In Arabidopsis thaliana (Mouse-ear cress), this protein is LOB domain-containing protein 35 (LBD35).